Here is a 400-residue protein sequence, read N- to C-terminus: Enolase (400 aa).

Q153 is a binding site for (2R)-2-phosphoglycerate. The active-site Proton donor is E195. 3 residues coordinate Mg(2+): D231, E274, and D301. Residues K326, R355, S356, and K377 each contribute to the (2R)-2-phosphoglycerate site. Residue K326 is the Proton acceptor of the active site.

This sequence belongs to the enolase family. Mg(2+) serves as cofactor.

The protein resides in the cytoplasm. The protein localises to the secreted. Its subcellular location is the cell surface. It carries out the reaction (2R)-2-phosphoglycerate = phosphoenolpyruvate + H2O. Its pathway is carbohydrate degradation; glycolysis; pyruvate from D-glyceraldehyde 3-phosphate: step 4/5. Catalyzes the reversible conversion of 2-phosphoglycerate (2-PG) into phosphoenolpyruvate (PEP). It is essential for the degradation of carbohydrates via glycolysis. The protein is Enolase of Halorubrum lacusprofundi (strain ATCC 49239 / DSM 5036 / JCM 8891 / ACAM 34).